Consider the following 367-residue polypeptide: Glutamate 5-kinase (367 aa).

Residue Lys-9 coordinates ATP. Substrate-binding residues include Ser-49, Asp-136, and Asn-148. ATP contacts are provided by residues 168-169 (TD) and 210-216 (TGGMKSK). A PUA domain is found at 276-350 (SGQIEVDAGA…GMQSQDIQVR (75 aa)).

This sequence belongs to the glutamate 5-kinase family.

The protein resides in the cytoplasm. It catalyses the reaction L-glutamate + ATP = L-glutamyl 5-phosphate + ADP. The protein operates within amino-acid biosynthesis; L-proline biosynthesis; L-glutamate 5-semialdehyde from L-glutamate: step 1/2. Catalyzes the transfer of a phosphate group to glutamate to form L-glutamate 5-phosphate. This is Glutamate 5-kinase from Bacillus cereus (strain ATCC 14579 / DSM 31 / CCUG 7414 / JCM 2152 / NBRC 15305 / NCIMB 9373 / NCTC 2599 / NRRL B-3711).